Reading from the N-terminus, the 378-residue chain is Succinyl-diaminopimelate desuccinylase (378 aa).

A Zn(2+)-binding site is contributed by H66. D68 is a catalytic residue. D100 is a binding site for Zn(2+). The active-site Proton acceptor is the E134. Zn(2+) is bound by residues E135, E163, and H350.

This sequence belongs to the peptidase M20A family. DapE subfamily. In terms of assembly, homodimer. The cofactor is Zn(2+). Co(2+) serves as cofactor.

The catalysed reaction is N-succinyl-(2S,6S)-2,6-diaminopimelate + H2O = (2S,6S)-2,6-diaminopimelate + succinate. It participates in amino-acid biosynthesis; L-lysine biosynthesis via DAP pathway; LL-2,6-diaminopimelate from (S)-tetrahydrodipicolinate (succinylase route): step 3/3. Its function is as follows. Catalyzes the hydrolysis of N-succinyl-L,L-diaminopimelic acid (SDAP), forming succinate and LL-2,6-diaminopimelate (DAP), an intermediate involved in the bacterial biosynthesis of lysine and meso-diaminopimelic acid, an essential component of bacterial cell walls. The sequence is that of Succinyl-diaminopimelate desuccinylase from Hydrogenovibrio crunogenus (strain DSM 25203 / XCL-2) (Thiomicrospira crunogena).